Reading from the N-terminus, the 306-residue chain is Heterogeneous nuclear ribonucleoproteins C1/C2 (306 aa).

A2 carries the N-acetylalanine modification. Residues K8, K50, K89, and K94 each participate in a glycyl lysine isopeptide (Lys-Gly) (interchain with G-Cter in SUMO2) cross-link. Residues 16 to 87 (SRVFIGNLNT…QVLDINLAAE (72 aa)) form the RRM domain. S107 and V108 each carry phosphoserine. Phosphothreonine is present on T109. 3 positions are modified to phosphoserine: S113, S115, and S121. 2 disordered regions span residues 139–190 (YPAR…KLKG) and 221–306 (QSKQ…EDDS). The Nuclear localization signal motif lies at 155-161 (PSKRQRV). A phosphoserine mark is found at S162 and S166. Low complexity predominate over residues 175–185 (SKSGQRGSSKS). K176 carries the N6-acetyllysine; alternate modification. K176 is covalently cross-linked (Glycyl lysine isopeptide (Lys-Gly) (interchain with G-Cter in SUMO2); alternate). Residues 190-238 (GDDLQAIKKELTQIKQKVDSLLENLEKIEKEQSKQAVEMKNDKSEEEQS) are a coiled coil. A compositionally biased stretch (basic and acidic residues) spans 221–232 (QSKQAVEMKNDK). Glycyl lysine isopeptide (Lys-Gly) (interchain with G-Cter in SUMO2) cross-links involve residues K223 and K229. A Glycyl lysine isopeptide (Lys-Gly) (interchain with G-Cter in SUMO2); alternate cross-link involves residue K232. K232 is covalently cross-linked (Glycyl lysine isopeptide (Lys-Gly) (interchain with G-Cter in SUMO1); alternate). 4 positions are modified to phosphoserine: S233, S238, S239, and S241. Positions 242 to 253 (VKKDETNVKMES) are enriched in basic and acidic residues. Residues K243 and K244 each participate in a glycyl lysine isopeptide (Lys-Gly) (interchain with G-Cter in SUMO2) cross-link. Residue K250 forms a Glycyl lysine isopeptide (Lys-Gly) (interchain with G-Cter in SUMO2); alternate linkage. K250 participates in a covalent cross-link: Glycyl lysine isopeptide (Lys-Gly) (interchain with G-Cter in SUMO); alternate. 2 positions are modified to phosphoserine: S253 and S260. A compositionally biased stretch (acidic residues) spans 255 to 276 (GGADDSAEEGDLLDDDDNEDRG). Residues 277–287 (DDQLELIKDDE) are compositionally biased toward basic and acidic residues. Positions 288–306 (KEAEEGEDDRDSANGEDDS) are enriched in acidic residues. S299 and S306 each carry phosphoserine.

The protein belongs to the RRM HNRPC family. RALY subfamily. As to quaternary structure, tetramer composed of 3 copies of isoform C1 and 1 copy of isoform C2. Assembly of 3 tetramers with bound pre-mRNA gives rise to a 19S complex that interacts with HNRNPA2B1 tetramers. Component of the 40S hnRNP particle. Identified in the spliceosome C complex. Interacts with IGF2BP1. Interacts with DHX9; this interaction is direct, enhanced probably by their concomitant binding to RNA and mediates the attachment to actin filaments. Interacts with PPIA/CYPA. Interacts with YWHAE. Post-translationally, phosphorylated on Ser-260 and Ser-299 in resting cells. Phosphorylated on Ser-253 and on 1 serine residue in the poly-Ser stretch at position 238 in response to hydrogen peroxide. In terms of processing, sumoylated. Sumoylation reduces affinity for mRNA. Ubiquitinated and degraded after nucleo-cytoplasmic transport by YWHAE.

The protein localises to the nucleus. In terms of biological role, binds pre-mRNA and nucleates the assembly of 40S hnRNP particles. Interacts with poly-U tracts in the 3'-UTR or 5'-UTR of mRNA and modulates the stability and the level of translation of bound mRNA molecules. Single HNRNPC tetramers bind 230-240 nucleotides. Trimers of HNRNPC tetramers bind 700 nucleotides. May play a role in the early steps of spliceosome assembly and pre-mRNA splicing. N6-methyladenosine (m6A) has been shown to alter the local structure in mRNAs and long non-coding RNAs (lncRNAs) via a mechanism named 'm(6)A-switch', facilitating binding of HNRNPC, leading to regulation of mRNA splicing. The chain is Heterogeneous nuclear ribonucleoproteins C1/C2 (HNRNPC) from Homo sapiens (Human).